The following is a 453-amino-acid chain: Chromosomal replication initiator protein DnaA (453 aa).

Residues 1–71 (MSEKEIWEKV…QAILFDVVGY (71 aa)) form a domain I, interacts with DnaA modulators region. Residues 71 to 114 (YEVKPHFITTEELANYSNNETATPKETTKPSTETTEDNHVLGRE) form a domain II region. Residues 115–331 (QFNAHNTFDT…GALTRLLAYS (217 aa)) form a domain III, AAA+ region region. Glycine 159, glycine 161, lysine 162, and threonine 163 together coordinate ATP. Positions 332–453 (QLLGKPITTE…ENLEKEIRNV (122 aa)) are domain IV, binds dsDNA.

This sequence belongs to the DnaA family. In terms of assembly, oligomerizes as a right-handed, spiral filament on DNA at oriC.

It localises to the cytoplasm. In terms of biological role, plays an essential role in the initiation and regulation of chromosomal replication. ATP-DnaA binds to the origin of replication (oriC) to initiate formation of the DNA replication initiation complex once per cell cycle. Binds the DnaA box (a 9 base pair repeat at the origin) and separates the double-stranded (ds)DNA. Forms a right-handed helical filament on oriC DNA; dsDNA binds to the exterior of the filament while single-stranded (ss)DNA is stabiized in the filament's interior. The ATP-DnaA-oriC complex binds and stabilizes one strand of the AT-rich DNA unwinding element (DUE), permitting loading of DNA polymerase. After initiation quickly degrades to an ADP-DnaA complex that is not apt for DNA replication. Binds acidic phospholipids. The polypeptide is Chromosomal replication initiator protein DnaA (Staphylococcus aureus (strain Mu3 / ATCC 700698)).